The primary structure comprises 307 residues: Ornithine carbamoyltransferase (307 aa).

Carbamoyl phosphate-binding positions include 50–53 (STRT), glutamine 77, arginine 101, and 128–131 (HPCQ). Residues asparagine 160, aspartate 224, and 228–229 (SM) contribute to the L-ornithine site. Residues 264 to 265 (CL) and arginine 292 each bind carbamoyl phosphate.

The protein belongs to the aspartate/ornithine carbamoyltransferase superfamily. OTCase family.

The protein localises to the cytoplasm. The catalysed reaction is carbamoyl phosphate + L-ornithine = L-citrulline + phosphate + H(+). It functions in the pathway amino-acid biosynthesis; L-arginine biosynthesis; L-arginine from L-ornithine and carbamoyl phosphate: step 1/3. Reversibly catalyzes the transfer of the carbamoyl group from carbamoyl phosphate (CP) to the N(epsilon) atom of ornithine (ORN) to produce L-citrulline. This Mycolicibacterium gilvum (strain PYR-GCK) (Mycobacterium gilvum (strain PYR-GCK)) protein is Ornithine carbamoyltransferase.